Reading from the N-terminus, the 374-residue chain is Protein RecA (374 aa).

Residue Gly77–Thr84 coordinates ATP. The tract at residues Ala355–Ala374 is disordered.

This sequence belongs to the RecA family.

It is found in the cytoplasm. In terms of biological role, can catalyze the hydrolysis of ATP in the presence of single-stranded DNA, the ATP-dependent uptake of single-stranded DNA by duplex DNA, and the ATP-dependent hybridization of homologous single-stranded DNAs. It interacts with LexA causing its activation and leading to its autocatalytic cleavage. This is Protein RecA from Synechococcus sp. (strain CC9605).